The chain runs to 140 residues: MAIERTFSIIKPDATRRNLTGAINALIEKAGLRIIAQKRVQITRPQAETFYAVHKERPFFGALVDTMISGPVVVQVLEGENAIKAYRDVLGATDPAKAAPGTIRKEFALSVGENSGHGSDASETAAIEIAQWFSGNEIVG.

Residues lysine 11, phenylalanine 59, arginine 87, threonine 93, arginine 104, and asparagine 114 each coordinate ATP. Histidine 117 functions as the Pros-phosphohistidine intermediate in the catalytic mechanism.

This sequence belongs to the NDK family. Homotetramer. Mg(2+) is required as a cofactor.

It is found in the cytoplasm. It carries out the reaction a 2'-deoxyribonucleoside 5'-diphosphate + ATP = a 2'-deoxyribonucleoside 5'-triphosphate + ADP. It catalyses the reaction a ribonucleoside 5'-diphosphate + ATP = a ribonucleoside 5'-triphosphate + ADP. Functionally, major role in the synthesis of nucleoside triphosphates other than ATP. The ATP gamma phosphate is transferred to the NDP beta phosphate via a ping-pong mechanism, using a phosphorylated active-site intermediate. The polypeptide is Nucleoside diphosphate kinase (Methylocella silvestris (strain DSM 15510 / CIP 108128 / LMG 27833 / NCIMB 13906 / BL2)).